The primary structure comprises 97 residues: Citrate lyase acyl carrier protein (97 aa).

Residue S14 is modified to O-(phosphoribosyl dephospho-coenzyme A)serine.

This sequence belongs to the CitD family. As to quaternary structure, oligomer with a subunit composition of (alpha,beta,gamma)6.

Its subcellular location is the cytoplasm. Covalent carrier of the coenzyme of citrate lyase. The chain is Citrate lyase acyl carrier protein from Yersinia enterocolitica serotype O:8 / biotype 1B (strain NCTC 13174 / 8081).